We begin with the raw amino-acid sequence, 123 residues long: Large ribosomal subunit protein uL24 (123 aa).

This sequence belongs to the universal ribosomal protein uL24 family. In terms of assembly, part of the 50S ribosomal subunit.

Functionally, one of two assembly initiator proteins, it binds directly to the 5'-end of the 23S rRNA, where it nucleates assembly of the 50S subunit. Located at the polypeptide exit tunnel on the outside of the subunit. This is Large ribosomal subunit protein uL24 from Pyrobaculum islandicum (strain DSM 4184 / JCM 9189 / GEO3).